The chain runs to 246 residues: MSRGSGGGYDRHITIFSPEGRLFQVEYAFKAVKAAGITSIGVRGKDSVCVVTQKKVPDKLLDQTSVSHLFPITKYLGLLATGMTADARTLVQQARNEAAEFRFKYGYEMPVDVLSKWIADKSQVYTQHAYMRPLGVVAMILGIDEEKGPQLFKCDPAGHFFGHKATSAGSKEQEAINFLEKKMKNDPAFSYEETVQTAISALQSVLQEDFKASEIEVGVVKKEDPIFRVLTTEEIDEHLTAISERD.

It belongs to the peptidase T1A family. As to quaternary structure, the 26S proteasome consists of a 20S proteasome core and two 19S regulatory subunits. The 20S proteasome core is composed of 28 subunits that are arranged in four stacked rings, resulting in a barrel-shaped structure. The two end rings are each formed by seven alpha subunits, and the two central rings are each formed by seven beta subunits. The catalytic chamber with the active sites is on the inside of the barrel.

It localises to the cytoplasm. Its subcellular location is the nucleus. The proteasome is a multicatalytic proteinase complex which is characterized by its ability to cleave peptides with Arg, Phe, Tyr, Leu, and Glu adjacent to the leaving group at neutral or slightly basic pH. The proteasome has an ATP-dependent proteolytic activity. This Nicotiana tabacum (Common tobacco) protein is Proteasome subunit alpha type-6 (PAA1).